The sequence spans 470 residues: 5-hydroxytryptamine receptor 2A (470 aa).

A disordered region spans residues 1–23 (MDVLFEDNAPLSPTTSSLMPSNG). Residues 1–80 (MDVLFEDNAP…LQEKNWSALL (80 aa)) are Extracellular-facing. Low complexity predominate over residues 10 to 21 (PLSPTTSSLMPS). N-linked (GlcNAc...) asparagine glycosylation is found at Asn38, Asn44, Asn51, and Asn54. The helical transmembrane segment at 81-97 (TAVVIILTIAGNILVIM) threads the bilayer. The Cytoplasmic portion of the chain corresponds to 98–111 (AVSLEKKLQNATNY). Residues 112–137 (FLMSLAIADMLLGFLVMPVSMLTILY) traverse the membrane as a helical segment. Residues 138 to 146 (GYRWPLPSK) are Extracellular-facing. The helical transmembrane segment at 147–171 (LCAVWIYLDVLFSTASIMHLCAISL) threads the bilayer. A disulfide bridge links Cys148 with Cys227. Asp155 provides a ligand contact to serotonin. Residues 172–174 (DRY) carry the DRY motif; important for ligand-induced conformation changes motif. The Cytoplasmic segment spans residues 172-191 (DRYVAIQNPIHHSRFNSRTK). Residues 192–215 (AFLKIIAVWTISVGISMPIPVFGL) form a helical membrane-spanning segment. The Extracellular portion of the chain corresponds to 216 to 232 (QDDSKVFKEGSCLLADD). Residues 233–258 (NFVLIGSFVSFFIPLTIMVITYFLTI) traverse the membrane as a helical segment. The Cytoplasmic portion of the chain corresponds to 259–321 (KSLQKEATLC…QSISNEQKAC (63 aa)). Residue Ser280 is modified to Phosphoserine. Residues 322 to 347 (KVLGIVFFLFVVMWCPFFITNIMAVI) form a helical membrane-spanning segment. A serotonin-binding site is contributed by Asn342. A disulfide bridge links Cys348 with Cys352. Residues 348–355 (CKESCNED) are Extracellular-facing. A helical transmembrane segment spans residues 356 to 381 (IIGALLNVFVWIGYLSSAVNPLVYTL). The short motif at 375–379 (NPLVY) is the NPxxY motif; important for ligand-induced conformation changes and signaling element. The Cytoplasmic segment spans residues 382–470 (FNKTYRSAFS…NTVNEKVSCV (89 aa)). Residues 468 to 470 (SCV) carry the PDZ-binding motif.

Belongs to the G-protein coupled receptor 1 family. In terms of assembly, interacts (via C-terminus) with MPDZ and PATJ. May interact (via C-terminus) with MPP3, PRDX6, DLG4, DLG1, CASK, APBA1 and MAGI2. Interacts with GRM2 and DRD2; this may affect signaling. Ubiquitous.

It is found in the cell membrane. Its subcellular location is the cell projection. The protein localises to the dendrite. The protein resides in the axon. It localises to the cytoplasmic vesicle. It is found in the membrane. Its subcellular location is the caveola. The protein localises to the presynapse. With respect to regulation, G-protein coupled receptor activity is regulated by lipids: oleamide increases HTR2A-mediated activity. Functionally, G-protein coupled receptor for 5-hydroxytryptamine (serotonin). Also functions as a receptor for various drugs and psychoactive substances, including mescaline, psilocybin, 1-(2,5-dimethoxy-4-iodophenyl)-2-aminopropane (DOI) and lysergic acid diethylamide (LSD). Ligand binding causes a conformation change that triggers signaling via guanine nucleotide-binding proteins (G proteins) and modulates the activity of downstream effectors. HTR2A is coupled to G(q)/G(11) G alpha proteins and activates phospholipase C-beta, releasing diacylglycerol (DAG) and inositol 1,4,5-trisphosphate (IP3) second messengers that modulate the activity of phosphatidylinositol 3-kinase and promote the release of Ca(2+) ions from intracellular stores, respectively. Beta-arrestin family members inhibit signaling via G proteins and mediate activation of alternative signaling pathways. Affects neural activity, perception, cognition and mood. Plays a role in the regulation of behavior, including responses to anxiogenic situations and psychoactive substances. Plays a role in intestinal smooth muscle contraction, and may play a role in arterial vasoconstriction. This is 5-hydroxytryptamine receptor 2A (HTR2A) from Canis lupus familiaris (Dog).